We begin with the raw amino-acid sequence, 333 residues long: Anthranilate phosphoribosyltransferase (333 aa).

5-phospho-alpha-D-ribose 1-diphosphate-binding positions include Gly-80, 83–84 (GD), Ser-88, 90–93 (NIST), 108–116 (KHGNRSVSS), and Ser-120. Gly-80 contributes to the anthranilate binding site. Ser-92 contributes to the Mg(2+) binding site. Residue Asn-111 participates in anthranilate binding. Residue Arg-166 participates in anthranilate binding. Residues Asp-224 and Glu-225 each coordinate Mg(2+).

The protein belongs to the anthranilate phosphoribosyltransferase family. Homodimer. It depends on Mg(2+) as a cofactor.

It carries out the reaction N-(5-phospho-beta-D-ribosyl)anthranilate + diphosphate = 5-phospho-alpha-D-ribose 1-diphosphate + anthranilate. Its pathway is amino-acid biosynthesis; L-tryptophan biosynthesis; L-tryptophan from chorismate: step 2/5. Catalyzes the transfer of the phosphoribosyl group of 5-phosphorylribose-1-pyrophosphate (PRPP) to anthranilate to yield N-(5'-phosphoribosyl)-anthranilate (PRA). The polypeptide is Anthranilate phosphoribosyltransferase (Yersinia pseudotuberculosis serotype O:1b (strain IP 31758)).